The primary structure comprises 199 residues: Probable GTP-binding protein EngB (199 aa).

An EngB-type G domain is found at 24–197; the sequence is EGYEVIFAGR…GARLNTFFGY (174 aa). Residues 32–39, 59–63, 77–80, 144–147, and 176–178 contribute to the GTP site; these read GRSNAGKS, GKTQH, DLPG, TKSD, and FSS. Mg(2+)-binding residues include Ser39 and Thr61.

The protein belongs to the TRAFAC class TrmE-Era-EngA-EngB-Septin-like GTPase superfamily. EngB GTPase family. The cofactor is Mg(2+).

Its function is as follows. Necessary for normal cell division and for the maintenance of normal septation. The chain is Probable GTP-binding protein EngB from Ruthia magnifica subsp. Calyptogena magnifica.